Here is a 583-residue protein sequence, read N- to C-terminus: MNHKQITTLWCRVIVEELIRQGAGFFCISPGSRSTPLTLAVAANPNARFRMFPDERSAGFYALGYARAAGKPAVLVCTSGTAVANYFPAVVEASADAQPMLVLSADRPFELLDAGANQTIRQQDIFGSYTRWNLELPEPGTGTPLASLLSTVGQAVKRSLGSPAGPVHLNLPFREPLEPESHDLAHPWVEPLRNWLASEQPWCRFEQPRTAPDANALTALQQILANAERPLFVAGSMDKADDAEAVASLADSLGILLFADLTSGLRLTNKCTPWQLAFQNETFATSFKPDVVIHFGGALIGKQPAMTLRKEPPFHYVVVRNHPGRFNPDHNVTLSIEASPAAVVSALSECRKPAEMGGFAALFSEVAHTIDTAACAPDEPVNEISAPRIVSSLTDGKHALFVANSMPARDMDLYAAPVSEKPLRVELNRGVSGIDGIISTAAGFSAGLDKPTTLLIGDISFLHDLNALSLLDNPTNPLIVIVLNNNGGGIFSFLPIASQTDRLDECFATPQNFSIESAARTFDLDYASPASNREFTELYADALKRNKSLVIEIRSNRQANLLLHRTLKAKLDPIFEKAGIFGN.

It belongs to the TPP enzyme family. MenD subfamily. In terms of assembly, homodimer. Mg(2+) serves as cofactor. Mn(2+) is required as a cofactor. Requires thiamine diphosphate as cofactor.

It catalyses the reaction isochorismate + 2-oxoglutarate + H(+) = 5-enolpyruvoyl-6-hydroxy-2-succinyl-cyclohex-3-ene-1-carboxylate + CO2. The protein operates within quinol/quinone metabolism; 1,4-dihydroxy-2-naphthoate biosynthesis; 1,4-dihydroxy-2-naphthoate from chorismate: step 2/7. It functions in the pathway quinol/quinone metabolism; menaquinone biosynthesis. Catalyzes the thiamine diphosphate-dependent decarboxylation of 2-oxoglutarate and the subsequent addition of the resulting succinic semialdehyde-thiamine pyrophosphate anion to isochorismate to yield 2-succinyl-5-enolpyruvyl-6-hydroxy-3-cyclohexene-1-carboxylate (SEPHCHC). This chain is 2-succinyl-5-enolpyruvyl-6-hydroxy-3-cyclohexene-1-carboxylate synthase, found in Chlorobaculum parvum (strain DSM 263 / NCIMB 8327) (Chlorobium vibrioforme subsp. thiosulfatophilum).